The following is an 882-amino-acid chain: Protein translocase subunit SecA (882 aa).

ATP contacts are provided by residues Gln79, 97–101 (GEGKT), and Asp487.

Belongs to the SecA family.

It localises to the plastid. The protein resides in the chloroplast stroma. It is found in the chloroplast thylakoid membrane. The enzyme catalyses ATP + H2O + cellular proteinSide 1 = ADP + phosphate + cellular proteinSide 2.. Functionally, has a central role in coupling the hydrolysis of ATP to the transfer of proteins across the thylakoid membrane. The polypeptide is Protein translocase subunit SecA (Gracilaria tenuistipitata var. liui (Red alga)).